We begin with the raw amino-acid sequence, 261 residues long: Glandular kallikrein-7, submandibular/renal (261 aa).

An N-terminal signal peptide occupies residues 1–18 (MWFLILFLDLSLGQIDAA). The propeptide at 19-24 (PPGQSR) is activation peptide. The 234-residue stretch at 25–258 (VIGGYKCEKN…FTSWIKEVMK (234 aa)) folds into the Peptidase S1 domain. 5 disulfides stabilise this stretch: Cys31–Cys173, Cys50–Cys66, Cys152–Cys219, Cys184–Cys198, and Cys209–Cys234. His65 functions as the Charge relay system in the catalytic mechanism. Asn108 is a glycosylation site (N-linked (GlcNAc...) asparagine). The active-site Charge relay system is Asp120. Residue Ser213 is the Charge relay system of the active site.

This sequence belongs to the peptidase S1 family. Kallikrein subfamily. In terms of tissue distribution, kidney and submandibular gland. Not expressed in liver, pancreas, spleen, parotid, testis, cortex, prostate, ovary and pituitary.

The catalysed reaction is Preferential cleavage of Arg-|-Xaa bonds in small molecule substrates. Highly selective action to release kallidin (lysyl-bradykinin) from kininogen involves hydrolysis of Met-|-Xaa or Leu-|-Xaa.. Glandular kallikreins cleave Met-Lys and Arg-Ser bonds in kininogen to release Lys-bradykinin. Predominant kallikrein protein in the kidney. The protein is Glandular kallikrein-7, submandibular/renal (Klk7) of Rattus norvegicus (Rat).